The primary structure comprises 689 residues: Glycine--tRNA ligase beta subunit (689 aa).

This sequence belongs to the class-II aminoacyl-tRNA synthetase family. As to quaternary structure, tetramer of two alpha and two beta subunits.

The protein localises to the cytoplasm. It carries out the reaction tRNA(Gly) + glycine + ATP = glycyl-tRNA(Gly) + AMP + diphosphate. This Pectobacterium carotovorum subsp. carotovorum (strain PC1) protein is Glycine--tRNA ligase beta subunit.